Consider the following 412-residue polypeptide: Maintenance of mitochondrial morphology protein 1 (412 aa).

The Lumenal segment spans residues 1 to 19; it reads MAQDVCPTRSEPSLSFLQG. A helical transmembrane segment spans residues 20 to 40; that stretch reads LILGQLSVVLLIAAFIKFFIF. Over 41-412 the chain is Cytoplasmic; it reads GEAPSAEETA…GSLPGIDMPT (372 aa). The 217-residue stretch at 121–337 folds into the SMP-LTD domain; sequence QPESLDWFNV…EPRFQEIELP (217 aa). Basic and acidic residues predominate over residues 372–384; it reads ARQELDTETDGLR. A disordered region spans residues 372–412; the sequence is ARQELDTETDGLRYRRRPVGDDTYSVSGSMPGSLPGIDMPT.

The protein belongs to the MMM1 family. As to quaternary structure, homodimer. Component of the ER-mitochondria encounter structure (ERMES) or MDM complex, composed of MMM1, MDM10, MDM12 and MDM34. An MMM1 homodimer associates with one molecule of MDM12 on each side in a pairwise head-to-tail manner, and the SMP-LTD domains of MMM1 and MDM12 generate a continuous hydrophobic tunnel for phospholipid trafficking.

Its subcellular location is the endoplasmic reticulum membrane. Component of the ERMES/MDM complex, which serves as a molecular tether to connect the endoplasmic reticulum (ER) and mitochondria. Components of this complex are involved in the control of mitochondrial shape and protein biogenesis, and function in nonvesicular lipid trafficking between the ER and mitochondria. The MDM12-MMM1 subcomplex functions in the major beta-barrel assembly pathway that is responsible for biogenesis of all outer membrane beta-barrel proteins, and acts in a late step after the SAM complex. The MDM10-MDM12-MMM1 subcomplex further acts in the TOM40-specific pathway after the action of the MDM12-MMM1 complex. Essential for establishing and maintaining the structure of mitochondria and maintenance of mtDNA nucleoids. The polypeptide is Maintenance of mitochondrial morphology protein 1 (Podospora anserina (strain S / ATCC MYA-4624 / DSM 980 / FGSC 10383) (Pleurage anserina)).